Reading from the N-terminus, the 520-residue chain is NAD(P)H-quinone oxidoreductase subunit 2 (520 aa).

The next 14 membrane-spanning stretches (helical) occupy residues 15–35 (ILPE…DLIL), 42–62 (WIGY…YFQW), 79–99 (LSII…LMSI), 106–126 (GTAL…GMFV), 132–152 (LVMI…LTGY), 167–187 (LLIG…LYGL), 210–230 (LGAV…ISAA), 244–264 (PTPV…ALAI), 280–300 (FVFT…ALAQ), 306–326 (MLAY…IAGT), 334–354 (IFYL…IILF), 378–398 (LGLS…GFFG), 400–420 (IYLF…LGLV), and 466–486 (VGLV…NPLF).

This sequence belongs to the complex I subunit 2 family. In terms of assembly, NDH-1 can be composed of about 15 different subunits; different subcomplexes with different compositions have been identified which probably have different functions.

It localises to the cellular thylakoid membrane. The catalysed reaction is a plastoquinone + NADH + (n+1) H(+)(in) = a plastoquinol + NAD(+) + n H(+)(out). It catalyses the reaction a plastoquinone + NADPH + (n+1) H(+)(in) = a plastoquinol + NADP(+) + n H(+)(out). Functionally, NDH-1 shuttles electrons from an unknown electron donor, via FMN and iron-sulfur (Fe-S) centers, to quinones in the respiratory and/or the photosynthetic chain. The immediate electron acceptor for the enzyme in this species is believed to be plastoquinone. Couples the redox reaction to proton translocation, and thus conserves the redox energy in a proton gradient. Cyanobacterial NDH-1 also plays a role in inorganic carbon-concentration. This Trichormus variabilis (strain ATCC 29413 / PCC 7937) (Anabaena variabilis) protein is NAD(P)H-quinone oxidoreductase subunit 2.